A 128-amino-acid chain; its full sequence is MRHYEVVFIVHPDQSEQVPAMIERYKAIVTARNGQIHRLEDWGRRQMAYPIQKVHKAHYVLMNIECDGEALGELEHAFKFNDAVLRHLVVKTKAAVTTPSPMMKEEKSRSLTAAPATDEAKPAEAESA.

Positions 97–128 (TTPSPMMKEEKSRSLTAAPATDEAKPAEAESA) are disordered. Basic and acidic residues predominate over residues 118-128 (DEAKPAEAESA).

The protein belongs to the bacterial ribosomal protein bS6 family.

In terms of biological role, binds together with bS18 to 16S ribosomal RNA. This is Small ribosomal subunit protein bS6 from Aromatoleum aromaticum (strain DSM 19018 / LMG 30748 / EbN1) (Azoarcus sp. (strain EbN1)).